The chain runs to 236 residues: CHD1 helical C-terminal domain containing protein 1 (236 aa).

Residues 1 to 29 (MEASDWQGGEGDKPLEKVGSVPCLERSSS) are disordered. A CHD1 helical C-terminal domain (CHCT) region spans residues 44 to 145 (LSQDTFKICK…TNQTAKFLAA (102 aa)). The disordered stretch occupies residues 197 to 236 (LEEPRSSHCSRGDSLRKLPQKPKLKKKRIKERLESPKSCS). Positions 198–212 (EEPRSSHCSRGDSLR) are enriched in basic and acidic residues. The segment covering 214–226 (LPQKPKLKKKRIK) has biased composition (basic residues). Positions 227-236 (ERLESPKSCS) are enriched in basic and acidic residues.

In terms of tissue distribution, exclusively expressed in testes.

Its subcellular location is the cytoplasm. The protein localises to the nucleus. Its function is as follows. May play a role in regulation of apoptosis. This chain is CHD1 helical C-terminal domain containing protein 1 (Chct1), found in Mus musculus (Mouse).